We begin with the raw amino-acid sequence, 56 residues long: Alpha-conotoxin EpI (56 aa).

An N-terminal signal peptide occupies residues 1–16; the sequence is MFTVFLLVVLATTVVS. Residues 17 to 39 constitute a propeptide that is removed on maturation; that stretch reads FTSDRASDSRKDAASGLIALTIK. 2 cysteine pairs are disulfide-bonded: Cys-41/Cys-47 and Cys-42/Cys-55. The interval 43–45 is ser-Xaa-Pro motif, crucial for potent interaction with nAChR; that stretch reads SDP. Tyr-54 bears the Sulfotyrosine mark. Cys-55 carries the cysteine amide modification.

The protein belongs to the conotoxin A superfamily. In terms of processing, both tyrosine sulfation and C-terminal amidation are important for activity and structure stability. In terms of tissue distribution, expressed by the venom duct.

Its subcellular location is the secreted. Functionally, alpha-conotoxins act on postsynaptic membranes, they bind to the nicotinic acetylcholine receptors (nAChR) and thus inhibit them. This native peptide blocks mammalian nicotinic acetylcholine receptors composed of alpha-3-beta-2/CHRNA3-CHRNB2 and alpha-3-beta-4/CHRNA3-CHRNB4 subunits. The chain is Alpha-conotoxin EpI from Conus episcopatus (Bishop's cone).